The following is a 71-amino-acid chain: Palustrin-Ca (71 aa).

A signal peptide spans 1 to 22; sequence MFTLKKSLLLLFFLGTISLSLC. A propeptide spanning residues 23–40 is cleaved from the precursor; it reads EQERDADGDEGEVEEVKR. Cys63 and Cys69 are joined by a disulfide.

This sequence belongs to the frog skin active peptide (FSAP) family. Brevinin subfamily. In terms of tissue distribution, expressed by the skin glands.

It localises to the secreted. Its subcellular location is the target cell membrane. Antibacterial peptide with amphipathic alpha-helical structure that exhibits potent broad-spectrum activity against Gram-positive and -negative bacteria. It is active against Listeria ATCC 54004 (MIC=30 ug/ml), S.aureus ATCC 25923 (MIC=7.8 ug/ml), S.suis 2 CVCC 606 (MIC=31.25 ug/ml), B.subtilis ADB403 (30 ug/ml), K.pneumoniae ATCC 700603 (MIC=60 ug/ml) and P.aeruginosa ATCC 227853 (MIC=30 ug/ml). Does not show activity against Salmonella ATCC 20020 and the fungus Candida albicans. Is also cytotoxic to HeLa cells at high concentrations. In addition, shows a strong antitumor activity but only a little hemolytic activity. Despite the presence of a Gly residue at position 10, this alpha-helical peptide remains relatively rigid, not exhibiting any significant flexibility during the molecular dynamics simulation. The peptide shows a preference for a position parallel to the target membrane that suggests it exerts its antimicrobial activity through a non-pore-forming mechanism of action, such as the carpet model or the interfacial activity model. The chain is Palustrin-Ca from Aquarana catesbeiana (American bullfrog).